Reading from the N-terminus, the 234-residue chain is Accessory gland protein Acp29AB (234 aa).

Residues 1-21 (MYATNLLYLLALWNLWLVSGG) form the signal peptide. Residues asparagine 29, asparagine 61, asparagine 127, and asparagine 164 are each glycosylated (N-linked (GlcNAc...) asparagine). The 98-residue stretch at 137-234 (VTCREMNGHL…SFVCQANQWA (98 aa)) folds into the C-type lectin domain. 2 cysteine pairs are disulfide-bonded: cysteine 139–cysteine 228 and cysteine 207–cysteine 220.

It is found in the secreted. Its function is as follows. Responsible for physiological and behavioral changes in mated female flies. This is Accessory gland protein Acp29AB (Acp29AB) from Drosophila simulans (Fruit fly).